A 124-amino-acid chain; its full sequence is Fluoride-specific ion channel FluC (124 aa).

4 consecutive transmembrane segments (helical) span residues 4-24 (VLYIAAGGAIGAVLRYSISIL), 35-55 (FGTLIVNVAGSFLMGCIYALA), 60-80 (IGPEWKALIGVGLLGALTTFS), and 100-120 (LNVLLNLILCLTVVYLGQQLI). Residues glycine 74 and threonine 77 each coordinate Na(+).

This sequence belongs to the fluoride channel Fluc/FEX (TC 1.A.43) family.

The protein resides in the cell inner membrane. The catalysed reaction is fluoride(in) = fluoride(out). With respect to regulation, na(+) is not transported, but it plays an essential structural role and its presence is essential for fluoride channel function. Fluoride-specific ion channel. Important for reducing fluoride concentration in the cell, thus reducing its toxicity. The chain is Fluoride-specific ion channel FluC from Shewanella amazonensis (strain ATCC BAA-1098 / SB2B).